The following is an 81-amino-acid chain: Photosystem I iron-sulfur center (81 aa).

2 consecutive 4Fe-4S ferredoxin-type domains span residues 2-31 and 39-68; these read AHSVKIYDTCIGCTQCVRACPTDVLEMVPW and IASAPRTEDCVGCKRCESACPTDYLSVRVY. The [4Fe-4S] cluster site is built by C11, C14, C17, C21, C48, C51, C54, and C58.

In terms of assembly, the eukaryotic PSI reaction center is composed of at least 11 subunits. [4Fe-4S] cluster serves as cofactor.

It localises to the plastid. The protein localises to the chloroplast thylakoid membrane. The catalysed reaction is reduced [plastocyanin] + hnu + oxidized [2Fe-2S]-[ferredoxin] = oxidized [plastocyanin] + reduced [2Fe-2S]-[ferredoxin]. Functionally, apoprotein for the two 4Fe-4S centers FA and FB of photosystem I (PSI); essential for photochemical activity. FB is the terminal electron acceptor of PSI, donating electrons to ferredoxin. The C-terminus interacts with PsaA/B/D and helps assemble the protein into the PSI complex. Required for binding of PsaD and PsaE to PSI. PSI is a plastocyanin-ferredoxin oxidoreductase, converting photonic excitation into a charge separation, which transfers an electron from the donor P700 chlorophyll pair to the spectroscopically characterized acceptors A0, A1, FX, FA and FB in turn. The protein is Photosystem I iron-sulfur center of Gnetum gnemon (Spanish joint-fir).